Consider the following 168-residue polypeptide: ATP synthase subunit b (168 aa).

Residues 9 to 29 (AIPFGTIAYTLFIFLLLLVML) traverse the membrane as a helical segment.

Belongs to the ATPase B chain family. F-type ATPases have 2 components, F(1) - the catalytic core - and F(0) - the membrane proton channel. F(1) has five subunits: alpha(3), beta(3), gamma(1), delta(1), epsilon(1). F(0) has three main subunits: a(1), b(2) and c(10-14). The alpha and beta chains form an alternating ring which encloses part of the gamma chain. F(1) is attached to F(0) by a central stalk formed by the gamma and epsilon chains, while a peripheral stalk is formed by the delta and b chains.

The protein resides in the cell membrane. F(1)F(0) ATP synthase produces ATP from ADP in the presence of a proton or sodium gradient. F-type ATPases consist of two structural domains, F(1) containing the extramembraneous catalytic core and F(0) containing the membrane proton channel, linked together by a central stalk and a peripheral stalk. During catalysis, ATP synthesis in the catalytic domain of F(1) is coupled via a rotary mechanism of the central stalk subunits to proton translocation. Its function is as follows. Component of the F(0) channel, it forms part of the peripheral stalk, linking F(1) to F(0). This is ATP synthase subunit b from Bacillus thuringiensis (strain Al Hakam).